A 134-amino-acid polypeptide reads, in one-letter code: Glycine cleavage system H protein (134 aa).

Positions 24–106 (TVRVGITDYA…YGAGWLLDIQ (83 aa)) constitute a Lipoyl-binding domain. At Lys65 the chain carries N6-lipoyllysine.

This sequence belongs to the GcvH family. The glycine cleavage system is composed of four proteins: P, T, L and H. The cofactor is (R)-lipoate.

In terms of biological role, the glycine cleavage system catalyzes the degradation of glycine. The H protein shuttles the methylamine group of glycine from the P protein to the T protein. This chain is Glycine cleavage system H protein, found in Mycobacterium tuberculosis (strain ATCC 25177 / H37Ra).